We begin with the raw amino-acid sequence, 911 residues long: Chromatin assembly factor 1 subunit A (911 aa).

Positions 1–31 are binds PCNA; sequence MLEEPEAATRTAAAVDCKDRPGFPVKRLIQA. Residues 166 to 200 are disordered; the sequence is HMEEEPGSPGDPKRTGDCQAGSLQSCPELTPGSRT. Positions 176–327 are binds CBX1 and CBX3 chromo shadow domains; it reads DPKRTGDCQA…LHRDREQQRE (152 aa). Residues 186-200 are compositionally biased toward polar residues; the sequence is GSLQSCPELTPGSRT. A phosphoserine mark is found at serine 190 and serine 208. Residues 217-230 carry the PxVxL motif motif; sequence FIEKVPVVVLEDIL. Disordered stretches follow at residues 250–408 and 578–618; these read SESE…EEEK and DSDD…VPHG. Residues 265-281 show a composition bias toward low complexity; that stretch reads LSHSSTNSSSPTSSPEG. Residue serine 293 is modified to Phosphoserine. The span at 310–408 shows a compositional bias: basic and acidic residues; the sequence is STEKGRSKLH…EEKRLREEEK (99 aa). 2 stretches are compositionally biased toward acidic residues: residues 578 to 589 and 597 to 612; these read DSDDEWEEEEPG and GDED…EDDG. A necessary for homodimerization and competence for chromatin assembly region spans residues 621 to 657; the sequence is SEDEGVTEECADPENHKVHQKLKAKEWDELLAKGKRF. Positions 639–911 are binds to p60; the sequence is HQKLKAKEWD…APIPAPTLCK (273 aa). Serine 776 is modified (phosphoserine). Disordered stretches follow at residues 819-843 and 866-886; these read PSAP…MLLK and GSGD…DDTD. Positions 827–839 are enriched in polar residues; it reads GSASTEGPGQSTP. Threonine 838 carries the phosphothreonine modification. Acidic residues predominate over residues 876–886; that stretch reads DTEEDEEDDTD.

It belongs to the CHAF1A family. Homodimer. Part of the CAF-1 complex that contains RBBP4, CHAF1B and CHAF1A. CHAF1A binds directly to CHAF1B. Only minor amounts of RBBP4 are complexed with CHAF1A and CHAF1B in G1 phase. Interacts with PCNA; the interaction is direct. Interacts (via the PxVxL motif) with CBX5; the interaction is direct. Interacts with MBD1. Interacts with histones H3.1, H3.2 and H3.1t.

The protein localises to the nucleus. In terms of biological role, acts as a component of the histone chaperone complex chromatin assembly factor 1 (CAF-1), which assembles histone octamers onto DNA during replication and repair. CAF-1 performs the first step of the nucleosome assembly process, bringing newly synthesized histones H3 and H4 to replicating DNA; histones H2A/H2B can bind to this chromatin precursor subsequent to DNA replication to complete the histone octamer. It may play a role in heterochromatin maintenance in proliferating cells by bringing newly synthesized cbx proteins to heterochromatic DNA replication foci. The protein is Chromatin assembly factor 1 subunit A of Mus musculus (Mouse).